The sequence spans 81 residues: uncharacterized protein (81 aa).

This is an uncharacterized protein from Escherichia coli (strain K12).